We begin with the raw amino-acid sequence, 271 residues long: Indole-3-glycerol phosphate synthase (271 aa).

Belongs to the TrpC family.

It catalyses the reaction 1-(2-carboxyphenylamino)-1-deoxy-D-ribulose 5-phosphate + H(+) = (1S,2R)-1-C-(indol-3-yl)glycerol 3-phosphate + CO2 + H2O. Its pathway is amino-acid biosynthesis; L-tryptophan biosynthesis; L-tryptophan from chorismate: step 4/5. The chain is Indole-3-glycerol phosphate synthase from Lachnoclostridium phytofermentans (strain ATCC 700394 / DSM 18823 / ISDg) (Clostridium phytofermentans).